A 311-amino-acid chain; its full sequence is Methionyl-tRNA formyltransferase (311 aa).

109 to 112 serves as a coordination point for (6S)-5,6,7,8-tetrahydrofolate; the sequence is SLLP.

Belongs to the Fmt family.

It carries out the reaction L-methionyl-tRNA(fMet) + (6R)-10-formyltetrahydrofolate = N-formyl-L-methionyl-tRNA(fMet) + (6S)-5,6,7,8-tetrahydrofolate + H(+). Attaches a formyl group to the free amino group of methionyl-tRNA(fMet). The formyl group appears to play a dual role in the initiator identity of N-formylmethionyl-tRNA by promoting its recognition by IF2 and preventing the misappropriation of this tRNA by the elongation apparatus. This Moorella thermoacetica (strain ATCC 39073 / JCM 9320) protein is Methionyl-tRNA formyltransferase.